The primary structure comprises 393 residues: Formate-dependent phosphoribosylglycinamide formyltransferase (393 aa).

N(1)-(5-phospho-beta-D-ribosyl)glycinamide-binding positions include 22-23 (EL) and Glu82. ATP contacts are provided by residues Arg114, Lys155, 160-165 (SSGKGQ), 195-198 (EGFI), and Glu203. The ATP-grasp domain occupies 119-308 (RLAAEELDLP…QFALHARAIL (190 aa)). 2 residues coordinate Mg(2+): Glu267 and Glu279. N(1)-(5-phospho-beta-D-ribosyl)glycinamide-binding positions include Asp286, Lys356, and 363-364 (RR).

The protein belongs to the PurK/PurT family. Homodimer.

The enzyme catalyses N(1)-(5-phospho-beta-D-ribosyl)glycinamide + formate + ATP = N(2)-formyl-N(1)-(5-phospho-beta-D-ribosyl)glycinamide + ADP + phosphate + H(+). It participates in purine metabolism; IMP biosynthesis via de novo pathway; N(2)-formyl-N(1)-(5-phospho-D-ribosyl)glycinamide from N(1)-(5-phospho-D-ribosyl)glycinamide (formate route): step 1/1. Its function is as follows. Involved in the de novo purine biosynthesis. Catalyzes the transfer of formate to 5-phospho-ribosyl-glycinamide (GAR), producing 5-phospho-ribosyl-N-formylglycinamide (FGAR). Formate is provided by PurU via hydrolysis of 10-formyl-tetrahydrofolate. This Pseudomonas entomophila (strain L48) protein is Formate-dependent phosphoribosylglycinamide formyltransferase.